We begin with the raw amino-acid sequence, 379 residues long: Anomalous homeobox protein (379 aa).

The segment at residues 135–196 is a DNA-binding region (homeobox); it reads PEGLKSRNFP…NYRRRQRALP (62 aa). The segment at 195-283 is disordered; that stretch reads LPQHMKPAQQ…SKPLDVSGHP (89 aa). Positions 237 to 246 are enriched in basic and acidic residues; it reads QWSEEREEKG.

The protein localises to the nucleus. The polypeptide is Anomalous homeobox protein (ANHX) (Homo sapiens (Human)).